We begin with the raw amino-acid sequence, 322 residues long: Gluconeogenesis factor (322 aa).

The protein belongs to the gluconeogenesis factor family.

It is found in the cytoplasm. Required for morphogenesis under gluconeogenic growth conditions. The protein is Gluconeogenesis factor of Listeria innocua serovar 6a (strain ATCC BAA-680 / CLIP 11262).